We begin with the raw amino-acid sequence, 250 residues long: Proteasome subunit alpha (250 aa).

It belongs to the peptidase T1A family. The 20S proteasome core is composed of 14 alpha and 14 beta subunits that assemble into four stacked heptameric rings, resulting in a barrel-shaped structure. The two inner rings, each composed of seven catalytic beta subunits, are sandwiched by two outer rings, each composed of seven alpha subunits. The catalytic chamber with the active sites is on the inside of the barrel. Has a gated structure, the ends of the cylinder being occluded by the N-termini of the alpha-subunits. Is capped at one or both ends by the proteasome regulatory ATPase, PAN.

It localises to the cytoplasm. The formation of the proteasomal ATPase PAN-20S proteasome complex, via the docking of the C-termini of PAN into the intersubunit pockets in the alpha-rings, triggers opening of the gate for substrate entry. Interconversion between the open-gate and close-gate conformations leads to a dynamic regulation of the 20S proteasome proteolysis activity. Functionally, component of the proteasome core, a large protease complex with broad specificity involved in protein degradation. The polypeptide is Proteasome subunit alpha (Haloquadratum walsbyi (strain DSM 16790 / HBSQ001)).